A 289-amino-acid chain; its full sequence is Testis-expressed protein 26 (289 aa).

Residues 1–26 form a disordered region; the sequence is MEQPGPRAPDPSLCHHNLQPTDDPNW. 5 mn regions span residues 30 to 42, 69 to 83, 144 to 157, 179 to 193, and 233 to 247; these read ATTMRTAFTPKTG, QTQYSDEYTWKSHSK, ISLTKRDFVDRSKA, DTEFRRNYQIPAKIP, and QTTYQSDYDKTYPDF.

The sequence is that of Testis-expressed protein 26 (TEX26) from Homo sapiens (Human).